The primary structure comprises 227 residues: UPF0173 metal-dependent hydrolase Bcer98_3294 (227 aa).

It belongs to the UPF0173 family.

In Bacillus cytotoxicus (strain DSM 22905 / CIP 110041 / 391-98 / NVH 391-98), this protein is UPF0173 metal-dependent hydrolase Bcer98_3294.